Here is a 331-residue protein sequence, read N- to C-terminus: Phenylalanine--tRNA ligase alpha subunit (331 aa).

Residue Glu256 participates in Mg(2+) binding.

Belongs to the class-II aminoacyl-tRNA synthetase family. Phe-tRNA synthetase alpha subunit type 1 subfamily. As to quaternary structure, tetramer of two alpha and two beta subunits. Mg(2+) is required as a cofactor.

It is found in the cytoplasm. It carries out the reaction tRNA(Phe) + L-phenylalanine + ATP = L-phenylalanyl-tRNA(Phe) + AMP + diphosphate + H(+). This is Phenylalanine--tRNA ligase alpha subunit from Colwellia psychrerythraea (strain 34H / ATCC BAA-681) (Vibrio psychroerythus).